Reading from the N-terminus, the 128-residue chain is MEREECSSSESGWTTYISSRMEEEEEEVIDEVYYEGHIIEKDRRKYANEYEINKDSDDSMASDASSGPSYHQTSNRGKRREGLALRNGKGESNDVYSHRIDDKNIGNLISRKKEKKKSENKSRSHKKK.

2 disordered regions span residues 1 to 26 (MEREECSSSESGWTTYISSRMEEEEE) and 54 to 128 (KDSD…HKKK). The span at 8 to 18 (SSESGWTTYIS) shows a compositional bias: polar residues. The SOFL-A signature appears at 11 to 16 (SGWTTY). Positions 59 to 68 (SMASDASSGP) match the SOFL-B motif. The span at 80–104 (REGLALRNGKGESNDVYSHRIDDKN) shows a compositional bias: basic and acidic residues. The Nuclear localization signal motif lies at 111–118 (RKKEKKKS).

This sequence belongs to the SOFL plant protein family. As to expression, expressed in seedlings, roots, flowers and siliques.

The protein localises to the cytoplasm. It is found in the nucleus. Its function is as follows. Involved in cytokinin-mediated development. In Arabidopsis thaliana (Mouse-ear cress), this protein is Protein SOB FIVE-LIKE 3.